A 99-amino-acid chain; its full sequence is Large ribosomal subunit protein uL23 (99 aa).

This sequence belongs to the universal ribosomal protein uL23 family. As to quaternary structure, part of the 50S ribosomal subunit. Contacts protein L29, and trigger factor when it is bound to the ribosome.

In terms of biological role, one of the early assembly proteins it binds 23S rRNA. One of the proteins that surrounds the polypeptide exit tunnel on the outside of the ribosome. Forms the main docking site for trigger factor binding to the ribosome. This Saccharopolyspora erythraea (strain ATCC 11635 / DSM 40517 / JCM 4748 / NBRC 13426 / NCIMB 8594 / NRRL 2338) protein is Large ribosomal subunit protein uL23.